The primary structure comprises 728 residues: Catalase-peroxidase (728 aa).

Positions 91 to 218 (WHSAGTYRTA…LAAVQMGLIY (128 aa)) form a cross-link, tryptophyl-tyrosyl-methioninium (Trp-Tyr) (with M-244). The Proton acceptor role is filled by His-92. Residues 218-244 (YVNPEGPDGNPDPVAAARDIRDTFARM) constitute a cross-link (tryptophyl-tyrosyl-methioninium (Tyr-Met) (with W-91)). Heme b is bound at residue His-259.

It belongs to the peroxidase family. Peroxidase/catalase subfamily. In terms of assembly, homodimer or homotetramer. The cofactor is heme b. In terms of processing, formation of the three residue Trp-Tyr-Met cross-link is important for the catalase, but not the peroxidase activity of the enzyme.

The catalysed reaction is H2O2 + AH2 = A + 2 H2O. It catalyses the reaction 2 H2O2 = O2 + 2 H2O. Its function is as follows. Bifunctional enzyme with both catalase and broad-spectrum peroxidase activity. The protein is Catalase-peroxidase of Burkholderia thailandensis (strain ATCC 700388 / DSM 13276 / CCUG 48851 / CIP 106301 / E264).